The chain runs to 360 residues: Phosphoserine aminotransferase (360 aa).

Residue arginine 42 participates in L-glutamate binding. Pyridoxal 5'-phosphate contacts are provided by tryptophan 102, threonine 152, aspartate 171, and glutamine 194. Position 195 is an N6-(pyridoxal phosphate)lysine (lysine 195). Position 237–238 (237–238 (NT)) interacts with pyridoxal 5'-phosphate.

This sequence belongs to the class-V pyridoxal-phosphate-dependent aminotransferase family. SerC subfamily. Homodimer. It depends on pyridoxal 5'-phosphate as a cofactor.

The protein resides in the cytoplasm. The enzyme catalyses O-phospho-L-serine + 2-oxoglutarate = 3-phosphooxypyruvate + L-glutamate. It carries out the reaction 4-(phosphooxy)-L-threonine + 2-oxoglutarate = (R)-3-hydroxy-2-oxo-4-phosphooxybutanoate + L-glutamate. Its pathway is amino-acid biosynthesis; L-serine biosynthesis; L-serine from 3-phospho-D-glycerate: step 2/3. It participates in cofactor biosynthesis; pyridoxine 5'-phosphate biosynthesis; pyridoxine 5'-phosphate from D-erythrose 4-phosphate: step 3/5. Catalyzes the reversible conversion of 3-phosphohydroxypyruvate to phosphoserine and of 3-hydroxy-2-oxo-4-phosphonooxybutanoate to phosphohydroxythreonine. The polypeptide is Phosphoserine aminotransferase (Coxiella burnetii (strain Dugway 5J108-111)).